A 336-amino-acid polypeptide reads, in one-letter code: NADH-quinone oxidoreductase subunit H (336 aa).

The next 8 membrane-spanning stretches (helical) occupy residues 14–34, 82–102, 115–135, 161–181, 186–206, 247–267, 273–293, and 312–332; these read IIVAQILALMVPILVSVAFLV, IIFLAAPMLTMMLALAAWAVI, VGILYLLAISSQGVYGIIMAG, IGLVIITVLLCVGSLNLSDVV, TVWFAIPLLPMFVIFFISALA, ILMSAMTSVLFLGGWLPPLDV, VPGPIWFILKICFCLFLFVWV, and VFLPFSLVWVILTAGVLVTFD.

The protein belongs to the complex I subunit 1 family. As to quaternary structure, NDH-1 is composed of 14 different subunits. Subunits NuoA, H, J, K, L, M, N constitute the membrane sector of the complex.

It is found in the cell inner membrane. It carries out the reaction a quinone + NADH + 5 H(+)(in) = a quinol + NAD(+) + 4 H(+)(out). Its function is as follows. NDH-1 shuttles electrons from NADH, via FMN and iron-sulfur (Fe-S) centers, to quinones in the respiratory chain. The immediate electron acceptor for the enzyme in this species is believed to be ubiquinone. Couples the redox reaction to proton translocation (for every two electrons transferred, four hydrogen ions are translocated across the cytoplasmic membrane), and thus conserves the redox energy in a proton gradient. This subunit may bind ubiquinone. In Rhodospirillum centenum (strain ATCC 51521 / SW), this protein is NADH-quinone oxidoreductase subunit H.